A 75-amino-acid chain; its full sequence is UPF0352 protein YejL (75 aa).

This sequence belongs to the UPF0352 family.

The polypeptide is UPF0352 protein YejL (Salmonella agona (strain SL483)).